The following is a 256-amino-acid chain: 5-keto-4-deoxy-D-glucarate aldolase (256 aa).

Residue histidine 50 is the Proton acceptor of the active site. Residue glutamine 151 participates in substrate binding. Glutamate 153 provides a ligand contact to Mg(2+). Substrate is bound by residues serine 178 and aspartate 179. Position 179 (aspartate 179) interacts with Mg(2+).

This sequence belongs to the HpcH/HpaI aldolase family. KDGluc aldolase subfamily. As to quaternary structure, homohexamer; trimer of dimers. It depends on Mg(2+) as a cofactor.

The catalysed reaction is 5-dehydro-4-deoxy-D-glucarate = 2-hydroxy-3-oxopropanoate + pyruvate. The enzyme catalyses 2-dehydro-3-deoxy-D-glucarate = 2-hydroxy-3-oxopropanoate + pyruvate. It functions in the pathway carbohydrate acid metabolism; galactarate degradation; D-glycerate from galactarate: step 2/3. Functionally, catalyzes the reversible retro-aldol cleavage of both 5-keto-4-deoxy-D-glucarate and 2-keto-3-deoxy-D-glucarate to pyruvate and tartronic semialdehyde. The sequence is that of 5-keto-4-deoxy-D-glucarate aldolase from Escherichia coli O157:H7 (strain EC4115 / EHEC).